Consider the following 162-residue polypeptide: Meiosis-specific protein HED1 (162 aa).

The interval 67-124 (KNLSENTGGGSPNGGAYLDAKKGVREQDQYQGGPSKELDRLQPPPSMKKSPPRKKKSL) is disordered. The span at 85-94 (DAKKGVREQD) shows a compositional bias: basic and acidic residues.

As to quaternary structure, interacts with RAD51.

It localises to the nucleus. The protein resides in the chromosome. Functionally, involved in regulation of meiotic recombination and repair of DNA damage. Inhibits RAD51-mediated recombination when the meiotic recombination machinery is impaired. This is Meiosis-specific protein HED1 (HED1) from Saccharomyces cerevisiae (strain ATCC 204508 / S288c) (Baker's yeast).